A 1010-amino-acid chain; its full sequence is Trifunctional purine biosynthetic protein adenosine-3 (1010 aa).

Residue A2 is modified to N-acetylalanine. In terms of domain architecture, ATP-grasp spans 111–318; that stretch reads KEFMDRHGIS…LYEVIQSILD (208 aa). Residues 190–193, E197, R220, and N229 contribute to the ATP site; that span reads EELL. Positions 288 and 290 each coordinate Mg(2+). K350 bears the N6-acetyllysine mark. Positions 434–809 are AIRS domain; it reads GLTYKESGVD…HFSVQPKKAR (376 aa). S440 carries the post-translational modification Phosphoserine. Residue T682 is modified to Phosphothreonine. S802 is modified (phosphoserine). Residues 810 to 1010 are GART domain; sequence VAVLISGTGS…NGRICWVTED (201 aa). Residue 818–820 participates in N(1)-(5-phospho-beta-D-ribosyl)glycinamide binding; sequence GSN. (6R)-10-formyltetrahydrofolate-binding positions include R871, 896-899, and N913; that span reads MRIL. Catalysis depends on H915, which acts as the Proton donor. 947 to 951 provides a ligand contact to (6R)-10-formyltetrahydrofolate; the sequence is AEDVD. 977-980 is a binding site for N(1)-(5-phospho-beta-D-ribosyl)glycinamide; that stretch reads KLAE.

This sequence in the N-terminal section; belongs to the GARS family. The protein in the central section; belongs to the AIR synthase family. It in the C-terminal section; belongs to the GART family. In terms of assembly, homodimer. It depends on Mg(2+) as a cofactor. Requires Mn(2+) as cofactor.

It carries out the reaction 5-phospho-beta-D-ribosylamine + glycine + ATP = N(1)-(5-phospho-beta-D-ribosyl)glycinamide + ADP + phosphate + H(+). It catalyses the reaction 2-formamido-N(1)-(5-O-phospho-beta-D-ribosyl)acetamidine + ATP = 5-amino-1-(5-phospho-beta-D-ribosyl)imidazole + ADP + phosphate + H(+). The catalysed reaction is N(1)-(5-phospho-beta-D-ribosyl)glycinamide + (6R)-10-formyltetrahydrofolate = N(2)-formyl-N(1)-(5-phospho-beta-D-ribosyl)glycinamide + (6S)-5,6,7,8-tetrahydrofolate + H(+). Its pathway is purine metabolism; IMP biosynthesis via de novo pathway; 5-amino-1-(5-phospho-D-ribosyl)imidazole from N(2)-formyl-N(1)-(5-phospho-D-ribosyl)glycinamide: step 2/2. It participates in purine metabolism; IMP biosynthesis via de novo pathway; N(1)-(5-phospho-D-ribosyl)glycinamide from 5-phospho-alpha-D-ribose 1-diphosphate: step 2/2. It functions in the pathway purine metabolism; IMP biosynthesis via de novo pathway; N(2)-formyl-N(1)-(5-phospho-D-ribosyl)glycinamide from N(1)-(5-phospho-D-ribosyl)glycinamide (10-formyl THF route): step 1/1. Functionally, trifunctional enzyme that catalyzes three distinct reactions as part of the 'de novo' inosine monophosphate biosynthetic pathway. The polypeptide is Trifunctional purine biosynthetic protein adenosine-3 (GART) (Bos taurus (Bovine)).